We begin with the raw amino-acid sequence, 132 residues long: Histone H2A (132 aa).

A compositionally biased stretch (basic residues) spans 1 to 13; it reads MSAKGKTGRKKAS. Residues 1-21 are disordered; the sequence is MSAKGKTGRKKASKGTSNSAK.

Belongs to the histone H2A family. In terms of assembly, the nucleosome is a histone octamer containing two molecules each of H2A, H2B, H3 and H4 assembled in one H3-H4 heterotetramer and two H2A-H2B heterodimers. The octamer wraps approximately 147 bp of DNA.

The protein resides in the nucleus. It is found in the chromosome. Core component of nucleosome. Nucleosomes wrap and compact DNA into chromatin, limiting DNA accessibility to the cellular machineries which require DNA as a template. Histones thereby play a central role in transcription regulation, DNA repair, DNA replication and chromosomal stability. DNA accessibility is regulated via a complex set of post-translational modifications of histones, also called histone code, and nucleosome remodeling. This Plasmodium falciparum protein is Histone H2A.